The primary structure comprises 640 residues: Threonine--tRNA ligase (640 aa).

Residues 1–61 (MPAITLPDGS…DADARLRFIT (61 aa)) form the TGS domain. Residues 243-536 (DHRKIGRQMD…LIENCAGRFP (294 aa)) are catalytic. Zn(2+) is bound by residues cysteine 336, histidine 387, and histidine 513.

This sequence belongs to the class-II aminoacyl-tRNA synthetase family. As to quaternary structure, homodimer. It depends on Zn(2+) as a cofactor.

It is found in the cytoplasm. The catalysed reaction is tRNA(Thr) + L-threonine + ATP = L-threonyl-tRNA(Thr) + AMP + diphosphate + H(+). Its function is as follows. Catalyzes the attachment of threonine to tRNA(Thr) in a two-step reaction: L-threonine is first activated by ATP to form Thr-AMP and then transferred to the acceptor end of tRNA(Thr). Also edits incorrectly charged L-seryl-tRNA(Thr). This is Threonine--tRNA ligase from Acidiphilium cryptum (strain JF-5).